The primary structure comprises 423 residues: MEGLSPRQGNNTTSSEGPFGTLGNATGISDVTFSYQVITSLLLGTLIFCAVLGNACVVAAIALERSLQNVANYLIGSLAVTDLMVSVLVLPMAALYQVLNKWTLGQVTCDLFIALDVLCCTSSILHLCAIALDRYWAITDPIDYVNKRTPRRAAALISLTWLIGFLISIPPMLGWRTPEDRSDPDACTISKDHGYTIYSTFGAFYIPLLLMLVLYGRIFRAARFRIRKTVKKAERKGADARSGVSPAPQPRKSVNGEPGGREWRQGPGSQAGGPLCTNGAVRRGDDGAALEVIEVHRVGSSKEHLPLPCEAGAIPCAPASFEKKNERNAEAKRKMALARERKTVKTLGIIMGTFILCWLPFFIVALVLPFCESSCHMPTLLGAIINWLGYSNSLLNPVIYAYFNKDFQNAFKKIVRCKFCRRR.

At 1–38 (MEGLSPRQGNNTTSSEGPFGTLGNATGISDVTFSYQVI) the chain is on the extracellular side. N-linked (GlcNAc...) asparagine glycosylation is found at Asn-10, Asn-11, and Asn-24. The chain crosses the membrane as a helical span at residues 39–59 (TSLLLGTLIFCAVLGNACVVA). Topologically, residues 60-73 (AIALERSLQNVANY) are cytoplasmic. The helical transmembrane segment at 74–98 (LIGSLAVTDLMVSVLVLPMAALYQV) threads the bilayer. Residues 99–107 (LNKWTLGQV) are Extracellular-facing. A helical transmembrane segment spans residues 108–132 (TCDLFIALDVLCCTSSILHLCAIAL). A disulfide bridge links Cys-109 with Cys-187. The serotonin site is built by Asp-116 and Cys-120. Positions 133–135 (DRY) match the DRY motif; important for ligand-induced conformation changes motif. The Cytoplasmic segment spans residues 133–152 (DRYWAITDPIDYVNKRTPRR). The chain crosses the membrane as a helical span at residues 153–174 (AAALISLTWLIGFLISIPPMLG). The Extracellular segment spans residues 175–193 (WRTPEDRSDPDACTISKDH). Residues 194 to 216 (GYTIYSTFGAFYIPLLLMLVLYG) form a helical membrane-spanning segment. The Cytoplasmic portion of the chain corresponds to 217 to 346 (RIFRAARFRI…LARERKTVKT (130 aa)). Residues 235-277 (RKGADARSGVSPAPQPRKSVNGEPGGREWRQGPGSQAGGPLCT) form a disordered region. Residues Lys-345, Thr-346, and Gly-352 each coordinate 1D-myo-inositol 4-phosphate. Residues 347-370 (LGIIMGTFILCWLPFFIVALVLPF) form a helical membrane-spanning segment. The Extracellular segment spans residues 371–378 (CESSCHMP). A helical membrane pass occupies residues 379–403 (TLLGAIINWLGYSNSLLNPVIYAYF). Residues 396–400 (NPVIY) carry the NPxxY motif; important for ligand-induced conformation changes and signaling motif. 1D-myo-inositol 4-phosphate-binding residues include Phe-403, Asn-404, and Lys-405. The Cytoplasmic segment spans residues 404–423 (NKDFQNAFKKIVRCKFCRRR).

This sequence belongs to the G-protein coupled receptor 1 family. 5-hydroxytryptamine receptor subfamily. HTR1A sub-subfamily. As to quaternary structure, heterodimer; heterodimerizes with GPER1. Interacts with YIF1B. Interacts with GPR39 and GALR1.

Its subcellular location is the cell membrane. The protein localises to the cell projection. It is found in the dendrite. G-protein coupled receptor activity is regulated by lipids: phosphatidylinositol 4-phosphate increases HTR1A-mediated activity. Functionally, G-protein coupled receptor for 5-hydroxytryptamine (serotonin). Also functions as a receptor for various drugs and psychoactive substances. Ligand binding causes a conformation change that triggers signaling via guanine nucleotide-binding proteins (G proteins) and modulates the activity of downstream effectors, such as adenylate cyclase. HTR1A is coupled to G(i)/G(o) G alpha proteins and mediates inhibitory neurotransmission: signaling inhibits adenylate cyclase activity and activates a phosphatidylinositol-calcium second messenger system that regulates the release of Ca(2+) ions from intracellular stores. Beta-arrestin family members regulate signaling by mediating both receptor desensitization and resensitization processes. This Canis lupus familiaris (Dog) protein is 5-hydroxytryptamine receptor 1A (HTR1A).